Here is a 541-residue protein sequence, read N- to C-terminus: MLSPQRVAAAASRGADDAMESSKPGPVQVVLVQKDQHSFELDEKALASILLQDHIRDLDVVVVSVAGAFRKGKSFILDFMLRYLYSQKESGHSNWLGDPEEPLTGFSWRGGSDPETTGIQIWSEVFTVEKPGGKKVAVVLMDTQGAFDSQSTVKDCATIFALSTMTSSVQIYNLSQNIQEDDLQQLQLFTEYGRLAMDEIFQKPFQTLMFLVRDWSFPYEYSYGLQGGMAFLDKRLQVKEHQHEEIQNVRNHIHSCFSDVTCFLLPHPGLQVATSPDFDGKLKDIAGEFKEQLQALIPYVLNPSKLMEKEINGSKVTCRGLLEYFKAYIKIYQGEDLPHPKSMLQATAEANNLAAAASAKDIYYNNMEEVCGGEKPYLSPDILEEKHCEFKQLALDHFKKTKKMGGKDFSFRYQQELEEEIKELYENFCKHNGSKNVFSTFRTPAVLFTGIVALYIASGLTGFIGLEVVAQLFNCMVGLLLIALLTWGYIRYSGQYRELGGAIDFGAAYVLEQASSHIGNSTQATVRDAVVGRPSMDKKAQ.

The interval 1–25 (MLSPQRVAAAASRGADDAMESSKPG) is N-terminal hypervariable region (HVR). At 1–445 (MLSPQRVAAA…NVFSTFRTPA (445 aa)) the chain is on the cytoplasmic side. Residues 57 to 305 (DLDVVVVSVA…LIPYVLNPSK (249 aa)) form the GB1/RHD3-type G domain. The GDP site is built by Arg70, Lys71, Gly72, Lys73, Ser74, Phe75, and Arg109. Asp142 serves as a coordination point for Mg(2+). Positions 213, 214, 272, and 275 each coordinate GDP. The tract at residues 343-434 (MLQATAEANN…YENFCKHNGS (92 aa)) is 3HB (three-helix bundle) domain. N6-acetyllysine is present on Lys391. Residues 446-466 (VLFTGIVALYIASGLTGFIGL) form a helical membrane-spanning segment. Residue Glu467 is a topological domain, lumenal. A helical membrane pass occupies residues 468 to 488 (VVAQLFNCMVGLLLIALLTWG). Residues 489 to 541 (YIRYSGQYRELGGAIDFGAAYVLEQASSHIGNSTQATVRDAVVGRPSMDKKAQ) lie on the Cytoplasmic side of the membrane. Residue Ser535 is modified to Phosphoserine.

The protein belongs to the TRAFAC class dynamin-like GTPase superfamily. GB1/RHD3 GTPase family. GB1 subfamily. In terms of assembly, monomeric and homodimeric. The homodimer, transiently formed by two molecules on opposing membranes, is the active form mediating ER membrane fusion. Interacts with ZFYVE27; both proteins are involved in endoplasmic reticulum tubular network organization. Interacts with REEP5; both proteins are involved in endoplasmic reticulum tubular network organization. As to expression, expressed in the central nervous system and in dorsal root ganglia neurons. Expressed in peripheral tissues (at protein level).

It is found in the endoplasmic reticulum membrane. It carries out the reaction GTP + H2O = GDP + phosphate + H(+). In terms of biological role, atlastin-3 (ATL3) is a membrane-anchored GTPase that mediates the GTP-dependent fusion of endoplasmic reticulum (ER) membranes, maintaining the continuous ER network. It facilitates the formation of three-way junctions where ER tubules intersect. Two atlastin-3 on neighboring ER tubules bind GTP and form loose homodimers through the GB1/RHD3-type G domains and 3HB regions. Upon GTP hydrolysis, the 3HB regions tighten, pulling the membranes together to drive their fusion. After fusion, the homodimer disassembles upon release of inorganic phosphate (Pi). Subsequently, GDP dissociates, resetting the monomers to a conformation ready for a new fusion cycle. The sequence is that of Atlastin-3 from Homo sapiens (Human).